Here is a 200-residue protein sequence, read N- to C-terminus: Glycerol-3-phosphate acyltransferase (200 aa).

6 helical membrane-spanning segments follow: residues 9 to 29 (IIIG…AYFW), 54 to 74 (VPGM…VLLA), 81 to 101 (DIAV…PLWL), 112 to 132 (GAGA…LVWL), 140 to 160 (YVSL…ALLN), and 165 to 185 (YLIF…SNIG).

Belongs to the PlsY family. As to quaternary structure, probably interacts with PlsX.

Its subcellular location is the cell membrane. It catalyses the reaction an acyl phosphate + sn-glycerol 3-phosphate = a 1-acyl-sn-glycero-3-phosphate + phosphate. It functions in the pathway lipid metabolism; phospholipid metabolism. Catalyzes the transfer of an acyl group from acyl-phosphate (acyl-PO(4)) to glycerol-3-phosphate (G3P) to form lysophosphatidic acid (LPA). This enzyme utilizes acyl-phosphate as fatty acyl donor, but not acyl-CoA or acyl-ACP. This chain is Glycerol-3-phosphate acyltransferase, found in Desulforamulus reducens (strain ATCC BAA-1160 / DSM 100696 / MI-1) (Desulfotomaculum reducens).